A 228-amino-acid chain; its full sequence is Aquaporin Z (228 aa).

Transmembrane regions (helical) follow at residues 1-21, 46-66, 82-102, 129-149, and 154-174; these read MLNK…GGCG, TVLT…NPAV, IPYW…LYVI, MMAG…IILG, and LAPA…IHLV. The short motif at 63–65 is the NPA 1 element; sequence NPA. The NPA 2 motif lies at 184–186; sequence NPA. The chain crosses the membrane as a helical span at residues 205–225; that stretch reads LFWVAPLVGAVIGAIIWKGLL.

This sequence belongs to the MIP/aquaporin (TC 1.A.8) family. In terms of assembly, homotetramer.

The protein resides in the cell inner membrane. The enzyme catalyses H2O(in) = H2O(out). Its function is as follows. Channel that permits osmotically driven movement of water in both directions. It is involved in the osmoregulation and in the maintenance of cell turgor during volume expansion in rapidly growing cells. It mediates rapid entry or exit of water in response to abrupt changes in osmolarity. In Brucella suis biovar 1 (strain 1330), this protein is Aquaporin Z.